The following is an 81-amino-acid chain: Protein RALF-like 6 (81 aa).

Positions 1-29 (MAAHKKSHIRIFFVSVMIILSLFSGFGEG) are cleaved as a signal peptide. Disulfide bonds link cysteine 46–cysteine 54 and cysteine 66–cysteine 72.

Belongs to the plant rapid alkalinization factor (RALF) family.

It is found in the secreted. In terms of biological role, cell signaling peptide that may regulate plant stress, growth, and development. Mediates a rapid alkalinization of extracellular space by mediating a transient increase in the cytoplasmic Ca(2+) concentration leading to a calcium-dependent signaling events through a cell surface receptor and a concomitant activation of some intracellular mitogen-activated protein kinases. In Arabidopsis thaliana (Mouse-ear cress), this protein is Protein RALF-like 6 (RALFL6).